A 205-amino-acid chain; its full sequence is Ephrin-A1 (205 aa).

A signal peptide spans 1–17 (MEFLWAPLLGLCCSLAA). The Ephrin RBD domain occupies 18-151 (ADRHIVFWNS…KLKVTVNGKI (134 aa)). N-linked (GlcNAc...) asparagine glycosylation occurs at Asn26. Intrachain disulfides connect Cys51-Cys92 and Cys80-Cys140. The GPI-anchor amidated serine moiety is linked to residue Ser182. A propeptide spans 183 to 205 (AAPRLFPLVWAVLLLPLLLLQTQ) (removed in mature form).

Belongs to the ephrin family. As to quaternary structure, monomer. Homodimer. Forms heterodimers with EPHA2. Binds to the receptor tyrosine kinases EPHA2, EPHA3, EPHA4, EPHA5, EPHA6 and EPHA7. Also binds with low affinity to EPHA1. In terms of processing, undergoes proteolysis by a metalloprotease to give rise to a soluble monomeric form. Post-translationally, N-Glycosylation is required for binding to EPHA2 receptor and inducing its internalization.

It localises to the cell membrane. It is found in the secreted. In terms of biological role, cell surface GPI-bound ligand for Eph receptors, a family of receptor tyrosine kinases which are crucial for migration, repulsion and adhesion during neuronal, vascular and epithelial development. Binds promiscuously Eph receptors residing on adjacent cells, leading to contact-dependent bidirectional signaling into neighboring cells. Plays an important role in angiogenesis and tumor neovascularization. The recruitment of VAV2, VAV3 and PI3-kinase p85 subunit by phosphorylated EPHA2 is critical for EFNA1-induced RAC1 GTPase activation and vascular endothelial cell migration and assembly. Exerts anti-oncogenic effects in tumor cells through activation and down-regulation of EPHA2. Activates EPHA2 by inducing tyrosine phosphorylation which leads to its internalization and degradation. Acts as a negative regulator in the tumorigenesis of gliomas by down-regulating EPHA2 and FAK. Can evoke collapse of embryonic neuronal growth cone and regulates dendritic spine morphogenesis. This chain is Ephrin-A1 (Efna1), found in Rattus norvegicus (Rat).